Reading from the N-terminus, the 324-residue chain is Tetrahydromethanopterin:alpha-L-glutamate ligase (324 aa).

One can recognise an ATP-grasp domain in the interval 113–321 (SYLLARAGLP…PAEYILEYLQ (209 aa)). ATP contacts are provided by residues K148, 195 to 204 (QEFIENPGRD), and R220. Residue D265 participates in Mg(2+) binding. D265 is a Mn(2+) binding site. Residues 274-293 (TGNENKKTEDKSTGQGSRIL) are disordered. Positions 294 and 296 each coordinate Mg(2+). Positions 294 and 296 each coordinate Mn(2+).

The protein belongs to the RimK family. MptN subfamily. In terms of assembly, homodimer. The cofactor is Mg(2+). Mn(2+) serves as cofactor.

The enzyme catalyses 5,6,7,8-tetrahydromethanopterin + L-glutamate + ATP = 5,6,7,8-tetrahydrosarcinapterin + ADP + phosphate + H(+). The protein operates within cofactor biosynthesis; 5,6,7,8-tetrahydrosarcinapterin biosynthesis. Catalyzes the ATP or GTP-dependent addition of one L-glutamate molecule to tetrahydromethanopterin, producing tetrahydrosarcinapterin. The chain is Tetrahydromethanopterin:alpha-L-glutamate ligase (mptN) from Methanosarcina acetivorans (strain ATCC 35395 / DSM 2834 / JCM 12185 / C2A).